An 80-amino-acid polypeptide reads, in one-letter code: uncharacterized protein (80 aa).

Functionally, essential for virus function. This is an uncharacterized protein from Sulfolobus spindle-shape virus 1 (SSV1).